The primary structure comprises 242 residues: 3-dehydroquinate dehydratase (242 aa).

3-dehydroquinate is bound by residues 39-41 (EIR) and R73. H135 serves as the catalytic Proton donor/acceptor. K162 serves as the catalytic Schiff-base intermediate with substrate. The 3-dehydroquinate site is built by R203 and Q228.

This sequence belongs to the type-I 3-dehydroquinase family. As to quaternary structure, homodimer.

It carries out the reaction 3-dehydroquinate = 3-dehydroshikimate + H2O. It participates in metabolic intermediate biosynthesis; chorismate biosynthesis; chorismate from D-erythrose 4-phosphate and phosphoenolpyruvate: step 3/7. In terms of biological role, involved in the third step of the chorismate pathway, which leads to the biosynthesis of aromatic amino acids. Catalyzes the cis-dehydration of 3-dehydroquinate (DHQ) and introduces the first double bond of the aromatic ring to yield 3-dehydroshikimate. The protein is 3-dehydroquinate dehydratase of Methanosarcina mazei (strain ATCC BAA-159 / DSM 3647 / Goe1 / Go1 / JCM 11833 / OCM 88) (Methanosarcina frisia).